We begin with the raw amino-acid sequence, 429 residues long: UDP-N-acetylglucosamine 1-carboxyvinyltransferase (429 aa).

22–23 (KN) provides a ligand contact to phosphoenolpyruvate. Residue Arg102 participates in UDP-N-acetyl-alpha-D-glucosamine binding. Cys126 (proton donor) is an active-site residue. Position 126 is a 2-(S-cysteinyl)pyruvic acid O-phosphothioketal (Cys126). Residues 131-135 (RPVDL), Asp316, and Ile338 contribute to the UDP-N-acetyl-alpha-D-glucosamine site.

It belongs to the EPSP synthase family. MurA subfamily.

The protein localises to the cytoplasm. The catalysed reaction is phosphoenolpyruvate + UDP-N-acetyl-alpha-D-glucosamine = UDP-N-acetyl-3-O-(1-carboxyvinyl)-alpha-D-glucosamine + phosphate. It functions in the pathway cell wall biogenesis; peptidoglycan biosynthesis. Cell wall formation. Adds enolpyruvyl to UDP-N-acetylglucosamine. The polypeptide is UDP-N-acetylglucosamine 1-carboxyvinyltransferase (Rhodopseudomonas palustris (strain BisB5)).